The chain runs to 211 residues: MAPSRNGMILKPHFHKDWQQRVDTWFNQPARKIRRRKARQAKARRIAPRPASGPIRPIVRCPTVRYHTKVRAGRGFSLEELRVAGIHKKVARTIGISVDPRRRNKSTESLQANVQRLKEYRSKLILFPRKPSAPKKGDSSAEELKLATQLTGPVMPIRNVYKKEKARVITEEEKNFKAFASLRMARANARLFGIRAKRAKEAAEQDVEKKK.

Lys-16 is subject to N6-acetyllysine. Phosphoserine is present on residues Ser-52, Ser-77, and Ser-106. Glycyl lysine isopeptide (Lys-Gly) (interchain with G-Cter in SUMO2) cross-links involve residues Lys-123 and Lys-145. Residue Lys-174 forms a Glycyl lysine isopeptide (Lys-Gly) (interchain with G-Cter in SUMO1); alternate linkage. Glycyl lysine isopeptide (Lys-Gly) (interchain with G-Cter in SUMO2); alternate cross-links involve residues Lys-174 and Lys-177. N6-acetyllysine; alternate is present on Lys-177.

It belongs to the eukaryotic ribosomal protein eL13 family. In terms of assembly, component of the large ribosomal subunit.

It localises to the cytoplasm. In terms of biological role, component of the large ribosomal subunit. The ribosome is a large ribonucleoprotein complex responsible for the synthesis of proteins in the cell. This is Large ribosomal subunit protein eL13 (Rpl13) from Mus musculus (Mouse).